The chain runs to 140 residues: FlaA locus uncharacterized protein YlxG (140 aa).

The disordered stretch occupies residues 1–21; that stretch reads MTSISSEYKLPEKTNTVSTNN.

It belongs to the FlgD family.

This Bacillus subtilis (strain 168) protein is FlaA locus uncharacterized protein YlxG (ylxG).